Reading from the N-terminus, the 633-residue chain is Probable potassium transport system protein Kup 3 (633 aa).

A run of 11 helical transmembrane segments spans residues 61–81 (LVSLVLWTLTAIVTIKYVLFL), 107–127 (PVLMFFAGVLGAALFIGDAMI), 143–163 (VAPALHDYVLPISVVIILLLF), 173–193 (VSVFFGPITLVWFLVMAAAGV), 211–231 (AIGFLWNAGLIGFIVLGAIFL), 255–275 (WFAVVFPALALNYLGQGALVL), 287–307 (LMFPNWALLPMVILATAGTII), 345–365 (IYLPLVNTILLTGVLALMLMF), 371–391 (LAPAYGVSITGAMVIDTILAF), 402–422 (ALTAIAVLLPLFSLELIFLGA), and 427–447 (IHHGGYVPILIAGTLIMMMWT).

It belongs to the HAK/KUP transporter (TC 2.A.72) family.

The protein localises to the cell inner membrane. It carries out the reaction K(+)(in) + H(+)(in) = K(+)(out) + H(+)(out). In terms of biological role, transport of potassium into the cell. Likely operates as a K(+):H(+) symporter. The polypeptide is Probable potassium transport system protein Kup 3 (Sinorhizobium medicae (strain WSM419) (Ensifer medicae)).